The primary structure comprises 734 residues: Photosystem I P700 chlorophyll a apoprotein A2 (734 aa).

8 helical membrane-spanning segments follow: residues 46–69 (IFAS…FHVA), 135–158 (LYSG…LHLQ), 175–199 (LNHH…HVAI), 273–291 (MAHH…GHMY), 330–353 (LHFQ…QHMY), 369–395 (AALY…IFFI), 417–439 (AIIS…LYVH), and 517–535 (FLVH…LILV). Cys559 and Cys568 together coordinate [4Fe-4S] cluster. 2 helical membrane-spanning segments follow: residues 575–596 (AFYL…YWHW) and 643–665 (LSVW…MFLI). Positions 654, 662, and 670 each coordinate chlorophyll a. Trp671 is a phylloquinone binding site. Residues 707–727 (LVGLAHFSVGYIFTYAAFLIA) form a helical membrane-spanning segment.

Belongs to the PsaA/PsaB family. In terms of assembly, the PsaA/B heterodimer binds the P700 chlorophyll special pair and subsequent electron acceptors. PSI consists of a core antenna complex that captures photons, and an electron transfer chain that converts photonic excitation into a charge separation. The eukaryotic PSI reaction center is composed of at least 11 subunits. Requires P700 is a chlorophyll a/chlorophyll a' dimer, A0 is one or more chlorophyll a, A1 is one or both phylloquinones and FX is a shared 4Fe-4S iron-sulfur center. as cofactor.

The protein localises to the plastid. It localises to the chloroplast thylakoid membrane. It catalyses the reaction reduced [plastocyanin] + hnu + oxidized [2Fe-2S]-[ferredoxin] = oxidized [plastocyanin] + reduced [2Fe-2S]-[ferredoxin]. PsaA and PsaB bind P700, the primary electron donor of photosystem I (PSI), as well as the electron acceptors A0, A1 and FX. PSI is a plastocyanin-ferredoxin oxidoreductase, converting photonic excitation into a charge separation, which transfers an electron from the donor P700 chlorophyll pair to the spectroscopically characterized acceptors A0, A1, FX, FA and FB in turn. Oxidized P700 is reduced on the lumenal side of the thylakoid membrane by plastocyanin. The polypeptide is Photosystem I P700 chlorophyll a apoprotein A2 (Antirrhinum majus (Garden snapdragon)).